Reading from the N-terminus, the 56-residue chain is Alpha-conotoxin Pn1.2 (56 aa).

Positions 1 to 16 (MFTVFLLVVLATTVVS) are cleaved as a signal peptide. Positions 17–39 (FTSDRASDGGNAAMSDLIALTIK) are excised as a propeptide. 2 cysteine pairs are disulfide-bonded: C41-C47 and C42-C55. The interval 43–45 (SHP) is ser-Xaa-Pro motif, crucial for potent interaction with nAChR. The residue at position 55 (C55) is a Cysteine amide.

This sequence belongs to the conotoxin A superfamily. In terms of processing, non-native isomers 'ribbon' (with disulfide connectivity C1-C4; C2-C3) and 'beads' (with disulfide connectivity C1-C2; C3-C4) also inhibit high voltage-activated (HVA) calcium channel currents in rat DRG neurons (20-30% inhibition at 1 uM toxin). Expressed by the venom duct.

The protein resides in the secreted. Alpha-conotoxins act on postsynaptic membranes, they bind to the nicotinic acetylcholine receptors (nAChR) and thus inhibit them. This toxin inhibits human alpha-7/CHRNA7 and alpha-9-alpha-10/CHRNA9/CHRNA10 AChR (complete inhibition at 3 uM of toxin). In addition, this toxin inhibits high voltage-activated (HVA) calcium channel currents in rat DRG neurons (22% inhibition at 1 uM toxin) probably by activating GABA(B) receptors (GABBR1 and/or GABBR2). The sequence is that of Alpha-conotoxin Pn1.2 from Conus pennaceus (Feathered cone).